Here is a 38-residue protein sequence, read N- to C-terminus: Large ribosomal subunit protein bL36 (38 aa).

This sequence belongs to the bacterial ribosomal protein bL36 family.

The polypeptide is Large ribosomal subunit protein bL36 (Cupriavidus metallidurans (strain ATCC 43123 / DSM 2839 / NBRC 102507 / CH34) (Ralstonia metallidurans)).